A 127-amino-acid polypeptide reads, in one-letter code: Fluoride-specific ion channel FluC (127 aa).

4 consecutive transmembrane segments (helical) span residues 3–23 (LVFL…YFVG), 38–58 (LGTF…GHLA), 67–87 (FGIF…SYGL), and 102–122 (ISYV…GWFL). Na(+) is bound by residues glycine 77 and threonine 80.

Belongs to the fluoride channel Fluc/FEX (TC 1.A.43) family.

The protein resides in the cell inner membrane. The enzyme catalyses fluoride(in) = fluoride(out). Its activity is regulated as follows. Na(+) is not transported, but it plays an essential structural role and its presence is essential for fluoride channel function. In terms of biological role, fluoride-specific ion channel. Important for reducing fluoride concentration in the cell, thus reducing its toxicity. This chain is Fluoride-specific ion channel FluC, found in Helicobacter acinonychis (strain Sheeba).